We begin with the raw amino-acid sequence, 448 residues long: Ribosomal protein uS12 methylthiotransferase RimO (448 aa).

Residues 6–116 (PKVGIVSLGC…VVEAVHAAIP (111 aa)) form the MTTase N-terminal domain. Positions 15, 51, 80, 147, 151, and 154 each coordinate [4Fe-4S] cluster. The Radical SAM core domain maps to 133-371 (LTPHHYAYLK…EAARQIADER (239 aa)). A TRAM domain is found at 373–439 (AAKEGTRIEV…DYDLWGDVVE (67 aa)).

This sequence belongs to the methylthiotransferase family. RimO subfamily. [4Fe-4S] cluster serves as cofactor.

It is found in the cytoplasm. The catalysed reaction is L-aspartate(89)-[ribosomal protein uS12]-hydrogen + (sulfur carrier)-SH + AH2 + 2 S-adenosyl-L-methionine = 3-methylsulfanyl-L-aspartate(89)-[ribosomal protein uS12]-hydrogen + (sulfur carrier)-H + 5'-deoxyadenosine + L-methionine + A + S-adenosyl-L-homocysteine + 2 H(+). Catalyzes the methylthiolation of an aspartic acid residue of ribosomal protein uS12. In Paramagnetospirillum magneticum (strain ATCC 700264 / AMB-1) (Magnetospirillum magneticum), this protein is Ribosomal protein uS12 methylthiotransferase RimO.